The chain runs to 1020 residues: Protein SCAR3 (1020 aa).

3 disordered regions span residues N167–R198, D351–R382, and D802–E827. Over residues K174 to S191 the composition is skewed to basic residues. Positions F365–R382 are enriched in basic and acidic residues. Residues D802–E814 show a composition bias toward polar residues. A WH2 domain is found at E954 to V972.

It belongs to the SCAR/WAVE family. In terms of assembly, binds BRK1. Interacts with SPK1, ABI1, ABI2, ABI3 and ABI4. Expressed in expanding cotyledons, expanding leaves and expanding siliques containing developing embryos. Detected in unopened flower buds. Reduced expression in mature leaves and mature cotyledons.

It is found in the cytoplasm. It localises to the cytoskeleton. Its function is as follows. Involved in regulation of actin and microtubule organization. Part of a WAVE complex that activates the Arp2/3 complex. Regulates trichome branch positioning and expansion. This is Protein SCAR3 (SCAR3) from Arabidopsis thaliana (Mouse-ear cress).